We begin with the raw amino-acid sequence, 434 residues long: F-box/LRR-repeat protein 21 (434 aa).

The F-box domain maps to 39–85 (RLDWGSLPHRVVLCVFQYLPLIDRARASSVCRRWNEVFHIPDLWRKF). 7 LRR repeats span residues 140-165 (LVNC…SKSH), 187-213 (DTPV…KMSS), 214-239 (CPHV…ALNY), 242-265 (LSDE…RIDV), 322-347 (GRSV…VVCA), 349-374 (GIQV…GLSE), and 375-400 (CEVS…SIME).

In terms of assembly, part of the SCF (SKP1-CUL1-F-box) E3 ubiquitin-protein ligase complex SCF(FBXL21) composed of CUL1, SKP1, RBX1 and FBXL21. Interacts with CRY2. Interacts with CRY1. Expressed in the adenohypophysis, hypothalamus (especially in the suprachiasmatic nucleus or nuclei, SCN) and pineal, all neuroendocrine structures associated with timing and homeostasis.

The protein localises to the cytoplasm. It is found in the cytosol. The protein resides in the nucleus. Its pathway is protein modification; protein ubiquitination. In terms of biological role, substrate-recognition component of the SCF(FBXL21) E3 ubiquitin ligase complex involved in circadian rhythm function. Plays a key role in the maintenance of both the speed and the robustness of the circadian clock oscillation. The SCF(FBXL21) complex mainly acts in the cytosol and mediates ubiquitination of CRY proteins (CRY1 and CRY2), leading to CRY proteins stabilization. The SCF(FBXL21) complex counteracts the activity of the SCF(FBXL3) complex and protects CRY proteins from degradation. Involved in the hypothalamic suprachiasmatic nucleus (SCN) clock regulating temporal organization of the daily activities. The polypeptide is F-box/LRR-repeat protein 21 (Fbxl21) (Ovis aries (Sheep)).